Here is a 238-residue protein sequence, read N- to C-terminus: Proteasome subunit beta type-6 (238 aa).

A2 carries the N-acetylalanine modification. Positions 2 to 33 (AAALAVRGAVSAPAFGPEALTPDWENREVSTG) are cleaved as a propeptide — removed in mature form. The Nucleophile role is filled by T34. The residue at position 68 (T68) is a Phosphothreonine.

It belongs to the peptidase T1B family. In terms of assembly, the 26S proteasome consists of a 20S proteasome core and two 19S regulatory subunits. The 20S proteasome core is a barrel-shaped complex made of 28 subunits that are arranged in four stacked rings. The two outer rings are each formed by seven alpha subunits, and the two inner rings are formed by seven beta subunits. The proteolytic activity is exerted by three beta-subunits PSMB5, PSMB6 and PSMB7.

The protein resides in the cytoplasm. It is found in the nucleus. The enzyme catalyses Cleavage of peptide bonds with very broad specificity.. Component of the 20S core proteasome complex involved in the proteolytic degradation of most intracellular proteins. This complex plays numerous essential roles within the cell by associating with different regulatory particles. Associated with two 19S regulatory particles, forms the 26S proteasome and thus participates in the ATP-dependent degradation of ubiquitinated proteins. The 26S proteasome plays a key role in the maintenance of protein homeostasis by removing misfolded or damaged proteins that could impair cellular functions, and by removing proteins whose functions are no longer required. Associated with the PA200 or PA28, the 20S proteasome mediates ubiquitin-independent protein degradation. This type of proteolysis is required in several pathways including spermatogenesis (20S-PA200 complex) or generation of a subset of MHC class I-presented antigenic peptides (20S-PA28 complex). Within the 20S core complex, PSMB6 displays a peptidylglutamyl-hydrolyzing activity also termed postacidic or caspase-like activity, meaning that the peptides bond hydrolysis occurs directly after acidic residues. This is Proteasome subunit beta type-6 (Psmb6) from Rattus norvegicus (Rat).